Here is a 948-residue protein sequence, read N- to C-terminus: Putative JmjC domain-containing histone demethylation protein 1 (948 aa).

Residues 243 to 402 enclose the JmjC domain; the sequence is VSTTKLAYYV…PQLSIYNLEL (160 aa). T294 is a substrate binding site. Positions 297 and 299 each coordinate Fe cation. K314 is a substrate binding site.

Belongs to the JHDM1 histone demethylase family. Fe(2+) is required as a cofactor.

It localises to the nucleus. It carries out the reaction N(6),N(6)-dimethyl-L-lysyl(36)-[histone H3] + 2 2-oxoglutarate + 2 O2 = L-lysyl(36)-[histone H3] + 2 formaldehyde + 2 succinate + 2 CO2. Functionally, may be a histone demethylase that specifically demethylates 'Lys-36' of histone H3, thereby playing a central role in histone code. Represses transcriptional silencing by negatively affecting heterochromatin stability. The sequence is that of Putative JmjC domain-containing histone demethylation protein 1 (jhd1) from Schizosaccharomyces pombe (strain 972 / ATCC 24843) (Fission yeast).